Consider the following 241-residue polypeptide: CD99 antigen-like protein 2 (241 aa).

A signal peptide spans 1 to 23 (MAKWGSPFVFALACLALSWRVYG). At 24–173 (DDFDLYDALG…TGFGSQAETG (150 aa)) the chain is on the extracellular side. Residues 30 to 168 (DALGDPTEKP…NDGSDTGFGS (139 aa)) are disordered. A compositionally biased stretch (gly residues) spans 143–154 (GGGGGGGGGRAT). Residues 174–196 (TIAGIASALAMALIGAVSSYISY) traverse the membrane as a helical segment. Over 197-241 (QQKKFCFSIQEGLNAEYVKGEHMEAVVSEEPQVKYSVVESQSAIP) the chain is Cytoplasmic.

The protein belongs to the CD99 family.

It is found in the cell membrane. It localises to the cell junction. May function as a homophilic adhesion molecule. The polypeptide is CD99 antigen-like protein 2 (cd99l2) (Xenopus tropicalis (Western clawed frog)).